A 321-amino-acid polypeptide reads, in one-letter code: Protein translocase subunit SecF (321 aa).

6 helical membrane passes run 23–43 (VWLI…FSWT), 158–178 (LQTT…YISI), 189–209 (LLAL…LGII), 217–237 (LFAV…VVVF), 258–280 (FAVS…PLIA), and 290–312 (YWFA…ALVP).

This sequence belongs to the SecD/SecF family. SecF subfamily. In terms of assembly, forms a complex with SecD. Part of the essential Sec protein translocation apparatus which comprises SecA, SecYEG and auxiliary proteins SecDF. Other proteins may also be involved.

The protein resides in the cell inner membrane. Part of the Sec protein translocase complex. Interacts with the SecYEG preprotein conducting channel. SecDF uses the proton motive force (PMF) to complete protein translocation after the ATP-dependent function of SecA. Its function is as follows. Probably participates in protein translocation into and across both the cytoplasmic and thylakoid membranes in cyanobacterial cells. This is Protein translocase subunit SecF from Prochlorococcus marinus (strain SARG / CCMP1375 / SS120).